The primary structure comprises 284 residues: 4-hydroxybenzoate octaprenyltransferase (284 aa).

Helical transmembrane passes span 19-39 (IGSLLLLWPTLWALLLAAQGL), 42-62 (LRVLVVFVLGVFLMRSAGCVI), 93-113 (LLLFVLLAVSSFLLVLTMNTL), 114-134 (TIQLSFIGILLAFVYPFMKRF), 136-156 (HLPQLVLGLAFSWSIPMAWAA), 158-178 (ANTLTPQVWVLFLINALWTIA), 210-230 (IIGLLQLATLSLLVALGQGLA), 233-253 (TSYYWGLLIAAGLFAYQQHLI), and 264-284 (AFLNNNYVGMAITAGILLSVW).

This sequence belongs to the UbiA prenyltransferase family. It depends on Mg(2+) as a cofactor.

Its subcellular location is the cell inner membrane. The enzyme catalyses all-trans-octaprenyl diphosphate + 4-hydroxybenzoate = 4-hydroxy-3-(all-trans-octaprenyl)benzoate + diphosphate. The protein operates within cofactor biosynthesis; ubiquinone biosynthesis. Catalyzes the prenylation of para-hydroxybenzoate (PHB) with an all-trans polyprenyl group. Mediates the second step in the final reaction sequence of ubiquinone-8 (UQ-8) biosynthesis, which is the condensation of the polyisoprenoid side chain with PHB, generating the first membrane-bound Q intermediate 3-octaprenyl-4-hydroxybenzoate. The sequence is that of 4-hydroxybenzoate octaprenyltransferase from Vibrio cholerae serotype O1 (strain ATCC 39541 / Classical Ogawa 395 / O395).